The chain runs to 138 residues: Sporulation-specific cell division protein SsgB (138 aa).

The protein belongs to the SsgA family. As to quaternary structure, monomer. Interacts with SsgA. Interacts with FtsZ (via N-terminus).

The protein localises to the cell septum. In terms of biological role, involved in sporulation-specific cell division. Required for early stages of sporulation. Important in the process of growth cessation prior to sporulation-specific cell division. Recruits cell division protein FtsZ to the future septum sites and tethers the contractile ring structure (Z ring) to the cytoplasmic membrane during sporulation. Stimulates polymerization and filament length of FtsZ in vitro. This chain is Sporulation-specific cell division protein SsgB, found in Thermobifida fusca (strain YX).